The primary structure comprises 592 residues: E3 ubiquitin-protein ligase RNF180 (592 aa).

At 1–564 (MKRSKELITK…DSRGWWFDMD (564 aa)) the chain is on the cytoplasmic side. Residue serine 230 is modified to Phosphoserine. Residues 432 to 474 (CAVCLDVYFNPYMCYPCRHIFCEPCLRTLAKDNPSSTPCPLCR) form an RING-type zinc finger. A helical membrane pass occupies residues 565–585 (MVIIYIYSVNWVIGFIVFCFL). Residues 586 to 592 (CYFFFPF) lie on the Extracellular side of the membrane.

In terms of assembly, interacts with ZIC2.

The protein resides in the endoplasmic reticulum membrane. The protein localises to the nucleus envelope. It catalyses the reaction S-ubiquitinyl-[E2 ubiquitin-conjugating enzyme]-L-cysteine + [acceptor protein]-L-lysine = [E2 ubiquitin-conjugating enzyme]-L-cysteine + N(6)-ubiquitinyl-[acceptor protein]-L-lysine.. The protein operates within protein modification; protein ubiquitination. Functionally, E3 ubiquitin-protein ligase which promotes polyubiquitination and degradation by the proteasome pathway of ZIC2. In Pongo abelii (Sumatran orangutan), this protein is E3 ubiquitin-protein ligase RNF180 (RNF180).